We begin with the raw amino-acid sequence, 186 residues long: Probable chorismate pyruvate-lyase (186 aa).

3 residues coordinate substrate: arginine 78, leucine 116, and glutamate 175.

Belongs to the UbiC family.

It localises to the cytoplasm. It carries out the reaction chorismate = 4-hydroxybenzoate + pyruvate. It participates in cofactor biosynthesis; ubiquinone biosynthesis. Its function is as follows. Removes the pyruvyl group from chorismate, with concomitant aromatization of the ring, to provide 4-hydroxybenzoate (4HB) for the ubiquinone pathway. The chain is Probable chorismate pyruvate-lyase from Psychromonas ingrahamii (strain DSM 17664 / CCUG 51855 / 37).